Consider the following 1036-residue polypeptide: MDNEDKISISAKEEKILSFWKEQDIFQKTLDNREGCPTFSFYDGPPFATGLPHYGHLLAGTIKDVVCRYASMDGHYVPRRFGWDCHGVPVEYEVEKSLGLTEPGAIERFGVANFNEECRKIVFRYADEWKYFVDRIGRWVDFSATWRTMDLSFMESVWWVFRSLYDQGLVYEGTKVVPFSTKLGTPLSNFEAGQNYKEVDDPSVVVKFALQDNQGFLLAWTTTPWTLVSNMALAVHPELTYVRIKDKESGDEYILGQESLPRWFPDRESYEWIGQLSGKSLVGQSYEPLFPYFQDKKELGAFRILPADFIEESEGTGIVHMAPAFGEADFFACQEHNVPLVCPVDNQGCYTAEVKDFVGEYIKSADKGIARRLKNENKLFYQGTVRHRYPFCWRTDSPLIYKAVNSWFVAVEKVKSKMLKANESIHWTPGHIKQGRFGKWLEGARDWAISRNRYWGTPIPIWRSDDGELLVIGSIQELEALSGQKIVDLHRHFIDEIEINQNGKSFRRIPYVFDCWFDSGAMPYAQNHYPFERAEETEACFPADFIAEGLDQTRGWFYTLTVIAAALFDQPAFKNVIVNGIILAEDGNKMSKRLNNYPSPKMIMDAYGADALRLYLLNSVVVKAEDLRFSDKGVESVLKQVLLPLSNALAFYKTYAELYGFDPKETDNIELAEIDRWILSSLYSLLGKTRESMSQYDLHAAVNPFVDFIEDLTNWYIRRSRRRFWDAEDSTDRRAAFSTLYEVLVVFSKVIAPFIPFISEDMYQQLRGETDPESVHLCDFPHVVLEKILPNLERKMQDIREIVALGHSLRKEHKLKVRQPLQNVYIVGSQERMEALAQVGSLIGEELNVKDVHFCSETPEYVTTLIKPNFRTLGKKVGNRLPEIQRALAGLPQEQIQAFMHKGQMVVSLGEETISLDKEDITVSWASAEGFVARSSASFVAVLDCQLTEPLIMEGIARELVNKINTMRRNGKLHVSDRIAIRLHAPVIVQEAFALHKEYICEETLTTSVSVIDYKEGEEWDINGHAVSFVLERVER.

Positions 46–56 match the 'HIGH' region motif; sequence PFATGLPHYGH. Residues 589–593 carry the 'KMSKS' region motif; sequence KMSKR. K592 is an ATP binding site.

It belongs to the class-I aminoacyl-tRNA synthetase family. IleS type 2 subfamily. In terms of assembly, monomer. It depends on Zn(2+) as a cofactor.

The protein resides in the cytoplasm. It carries out the reaction tRNA(Ile) + L-isoleucine + ATP = L-isoleucyl-tRNA(Ile) + AMP + diphosphate. In terms of biological role, catalyzes the attachment of isoleucine to tRNA(Ile). As IleRS can inadvertently accommodate and process structurally similar amino acids such as valine, to avoid such errors it has two additional distinct tRNA(Ile)-dependent editing activities. One activity is designated as 'pretransfer' editing and involves the hydrolysis of activated Val-AMP. The other activity is designated 'posttransfer' editing and involves deacylation of mischarged Val-tRNA(Ile). This chain is Isoleucine--tRNA ligase, found in Chlamydia trachomatis serovar L2 (strain ATCC VR-902B / DSM 19102 / 434/Bu).